Consider the following 289-residue polypeptide: ATP synthase gamma chain (289 aa).

Belongs to the ATPase gamma chain family. F-type ATPases have 2 components, CF(1) - the catalytic core - and CF(0) - the membrane proton channel. CF(1) has five subunits: alpha(3), beta(3), gamma(1), delta(1), epsilon(1). CF(0) has three main subunits: a, b and c.

It is found in the cell inner membrane. Functionally, produces ATP from ADP in the presence of a proton gradient across the membrane. The gamma chain is believed to be important in regulating ATPase activity and the flow of protons through the CF(0) complex. The sequence is that of ATP synthase gamma chain from Acinetobacter baumannii (strain AB307-0294).